Here is a 351-residue protein sequence, read N- to C-terminus: Tetraacyldisaccharide 4'-kinase (351 aa).

Thr-61–Thr-68 provides a ligand contact to ATP.

Belongs to the LpxK family.

It catalyses the reaction a lipid A disaccharide + ATP = a lipid IVA + ADP + H(+). It functions in the pathway glycolipid biosynthesis; lipid IV(A) biosynthesis; lipid IV(A) from (3R)-3-hydroxytetradecanoyl-[acyl-carrier-protein] and UDP-N-acetyl-alpha-D-glucosamine: step 6/6. Transfers the gamma-phosphate of ATP to the 4'-position of a tetraacyldisaccharide 1-phosphate intermediate (termed DS-1-P) to form tetraacyldisaccharide 1,4'-bis-phosphate (lipid IVA). In Xanthomonas campestris pv. campestris (strain 8004), this protein is Tetraacyldisaccharide 4'-kinase.